The chain runs to 316 residues: dTDP-4-dehydro-6-deoxyglucose reductase (316 aa).

16 to 17 (FI) provides a ligand contact to NAD(+). Tyr151 serves as the catalytic Proton acceptor. Lys155 contributes to the NAD(+) binding site.

The protein belongs to the NAD(P)-dependent epimerase/dehydratase family.

The enzyme catalyses dTDP-alpha-D-fucose + NAD(+) = dTDP-4-dehydro-6-deoxy-alpha-D-glucose + NADH + H(+). It carries out the reaction dTDP-alpha-D-fucose + NADP(+) = dTDP-4-dehydro-6-deoxy-alpha-D-glucose + NADPH + H(+). The protein operates within bacterial outer membrane biogenesis; LPS O-antigen biosynthesis. With respect to regulation, inhibited by Cu(2+), while other divalent cations such as Ca(2+), Co(2+), Fe(2+), Mn(2+) and Mg(2+) have no obvious effects on enzyme activity. Its function is as follows. Catalyzes the stereospecific reduction of the C-4 keto group of dTDP-4-dehydro-6-deoxy-D-glucose, leading to dTDP-D-fucopyranose. This is a step in the biosynthesis of D-fucofuranose, a component of E.coli O52 O antigen. Is more efficient using NADH than NADPH as cosubstrate. In Escherichia coli, this protein is dTDP-4-dehydro-6-deoxyglucose reductase (fcf1).